A 255-amino-acid chain; its full sequence is Type III pantothenate kinase (255 aa).

ATP is bound at residue Asp-6–Val-13. Substrate is bound by residues Tyr-100 and Gly-107–Arg-110. The Proton acceptor role is filled by Asp-109. Residue Asp-129 coordinates K(+). Residue Thr-132 coordinates ATP. Thr-184 is a binding site for substrate.

This sequence belongs to the type III pantothenate kinase family. In terms of assembly, homodimer. The cofactor is NH4(+). Requires K(+) as cofactor.

It localises to the cytoplasm. The catalysed reaction is (R)-pantothenate + ATP = (R)-4'-phosphopantothenate + ADP + H(+). It participates in cofactor biosynthesis; coenzyme A biosynthesis; CoA from (R)-pantothenate: step 1/5. Its function is as follows. Catalyzes the phosphorylation of pantothenate (Pan), the first step in CoA biosynthesis. This is Type III pantothenate kinase from Caldanaerobacter subterraneus subsp. tengcongensis (strain DSM 15242 / JCM 11007 / NBRC 100824 / MB4) (Thermoanaerobacter tengcongensis).